The chain runs to 650 residues: Acetyl-coenzyme A synthetase (650 aa).

CoA contacts are provided by residues 191–194 (RGGR), Thr311, and Asn335. ATP is bound by residues 387-389 (GEP), 411-416 (DTWWQT), Asp500, and Arg515. Ser523 is a binding site for CoA. Position 526 (Arg526) interacts with ATP. Positions 537, 539, and 542 each coordinate Mg(2+). Arg584 provides a ligand contact to CoA. An N6-acetyllysine modification is found at Lys609.

It belongs to the ATP-dependent AMP-binding enzyme family. Requires Mg(2+) as cofactor. Post-translationally, acetylated. Deacetylation by the SIR2-homolog deacetylase activates the enzyme.

The enzyme catalyses acetate + ATP + CoA = acetyl-CoA + AMP + diphosphate. Catalyzes the conversion of acetate into acetyl-CoA (AcCoA), an essential intermediate at the junction of anabolic and catabolic pathways. AcsA undergoes a two-step reaction. In the first half reaction, AcsA combines acetate with ATP to form acetyl-adenylate (AcAMP) intermediate. In the second half reaction, it can then transfer the acetyl group from AcAMP to the sulfhydryl group of CoA, forming the product AcCoA. This Shewanella sp. (strain ANA-3) protein is Acetyl-coenzyme A synthetase.